The primary structure comprises 459 residues: DnaJ protein homolog XDJ1 (459 aa).

Residues 7–79 (GDRLYDVLGV…KSHYDLYGDD (73 aa)) enclose the J domain. Residues 146-240 (GKKLKFDLKR…CAGLGLLSKK (95 aa)) form a CR-type zinc finger. CXXCXGXG motif repeat units lie at residues 159–166 (CIKCHGSG), 181–188 (CESCAGKG), 208–215 (CEKCNGKG), and 228–235 (CPDCAGLG).

The protein resides in the mitochondrion outer membrane. This is DnaJ protein homolog XDJ1 (XDJ1) from Saccharomyces cerevisiae (strain ATCC 204508 / S288c) (Baker's yeast).